A 154-amino-acid chain; its full sequence is Snaclec EMS16 subunit beta (154 aa).

The signal sequence occupies residues 1 to 26 (MGRLISVRFSLLVVFLSLSGIGAGLC). Cysteine 27 and cysteine 38 form a disulfide bridge. The C-type lectin domain maps to 34-147 (FDQHCYKVFE…CEKSVSFVCK (114 aa)). An N-linked (GlcNAc...) asparagine glycan is attached at asparagine 47. 2 disulfide bridges follow: cysteine 55-cysteine 146 and cysteine 121-cysteine 138.

Belongs to the snaclec family. Heterodimer of subunits A and B; disulfide-linked. Expressed by the venom gland.

The protein resides in the secreted. In terms of biological role, EMS16 is a potent and selective inhibitor of alpha-2/beta-1 (ITGA2/ITGB1) integrin and acts as a potent antagonist of platelet aggregation and cell migration. Binds specifically to the I domain of the alpha-2 subunit, in a metal ion-independent fashion. This Echis multisquamatus (Central Asian sand viper) protein is Snaclec EMS16 subunit beta.